The primary structure comprises 123 residues: Putative oocyte-secreted protein 1 homolog (123 aa).

The signal sequence occupies residues 1–26 (MKTILGFKGLFYLHSLIWTCAGDWSA).

This sequence belongs to the PLAC1 family.

The protein resides in the secreted. May be involved in cell differentiation. This Homo sapiens (Human) protein is Putative oocyte-secreted protein 1 homolog (OOSP1).